The sequence spans 524 residues: MVPQALLFVPLLVFPLCFGKFPIYTIPDKLGPWSPIDIHHLSCPNNLVVEDEGCTNLSGFSYMELKVGYISAIKMNGFTCTGVVTEAETYTNFVGYVTTTFKRKHFRPTPDACRAAYNWKMAGDPRYEESLHNPYPDYHWLRTVKTTKESLVIISPSVADLDPYDRSLHSRVFPGGNCSGVAVSSTYCSTNHDYTIWMPENPRLGMSCDIFTNSRGKRASKGSETCGFVDERGLYKSLKGACKLKLCGVLGLRLMDGTWVAMQTSNETKWCPPGQLVNLHDFRSDEIEHLVVEELVKKREECLDALESIMTTKSVSFRRLSHLRKLVPGFGKAYTIFNKTLMEADAHYKSVRTWNEIIPSKGCLRVGGRCHPHVNGVFFNGIILGPDGNVLIPEMQSSLLQQHMELLVSSVIPLMHPLADPSTVFKNGDEAEDFVEVHLPDVHERISGVDLGLPNWGKYVLLSAGALTALMLIIFLMTCWRRVNRSEPTQHNLRGTGREVSVTPQSGKIISSWESYKSGGETGL.

A signal peptide spans 1–19 (MVPQALLFVPLLVFPLCFG). Over 20 to 459 (KFPIYTIPDK…DLGLPNWGKY (440 aa)) the chain is Virion surface. Disulfide bonds link cysteine 43-cysteine 302, cysteine 54-cysteine 226, cysteine 80-cysteine 113, cysteine 178-cysteine 188, cysteine 208-cysteine 247, and cysteine 242-cysteine 271. N-linked (GlcNAc...) asparagine; by host glycosylation occurs at asparagine 56. N-linked (GlcNAc...) asparagine; by host glycosylation is found at asparagine 266 and asparagine 338. Cysteine 363 and cysteine 370 form a disulfide bridge. The helical transmembrane segment at 460–480 (VLLSAGALTALMLIIFLMTCW) threads the bilayer. The S-palmitoyl cysteine; by host moiety is linked to residue cysteine 479. Topologically, residues 481–524 (RRVNRSEPTQHNLRGTGREVSVTPQSGKIISSWESYKSGGETGL) are intravirion.

This sequence belongs to the lyssavirus glycoprotein family. In terms of assembly, homotrimer. Interacts with matrix protein. Interacts with host TRFC. Interacts with host BST2; this interaction inhibits viral budding by tethering new virions to the cell surface. Interacts with host ITGB1. Interacts with host GRM2. In terms of processing, glycosylated and palmitoylated by host. Glycosylation is crucial for glycoprotein export at the cell surface.

The protein resides in the virion membrane. Attaches the virus to host cellular receptor, inducing endocytosis of the virion by using different host proteins including TFRC, GRM2 and ITGB1. In the endosome, the acidic pH induces conformational changes in the glycoprotein trimer, which trigger fusion between virus and cell membrane. There is convincing in vitro evidence that the muscular form of the nicotinic acetylcholine receptor (nAChR), the neuronal cell adhesion molecule (NCAM), and the p75 neurotrophin receptor (p75NTR) bind glycoprotein and thereby facilitate rabies virus entry into cells. The polypeptide is Glycoprotein (G) (Homo sapiens (Human)).